We begin with the raw amino-acid sequence, 327 residues long: N-acetylmuramoyl-L-alanine amidase sle1 (327 aa).

The first 25 residues, M1–A25, serve as a signal peptide directing secretion. 3 consecutive LysM domains span residues T27 to V70, S86 to V129, and T150 to V193. Residues L68–T89 form a disordered region. Positions S71–T87 are enriched in low complexity. One can recognise a Peptidase C51 domain in the interval G203–H327.

The protein resides in the secreted. The protein localises to the cell surface. The enzyme catalyses Hydrolyzes the link between N-acetylmuramoyl residues and L-amino acid residues in certain cell-wall glycopeptides.. Functionally, peptidoglycan hydrolase involved in the splitting of the septum during cell division. The protein is N-acetylmuramoyl-L-alanine amidase sle1 (sle1) of Staphylococcus saprophyticus subsp. saprophyticus (strain ATCC 15305 / DSM 20229 / NCIMB 8711 / NCTC 7292 / S-41).